We begin with the raw amino-acid sequence, 363 residues long: MESPRVEESYDKMSELKAFDDTKAGVKGLVDSGITKVPQIFVLPPKDRAKKCETHFVFPVIDLQGIDEDPIKHKEIVDKVRDASEKWGFFQVVNHGIPTSVLDRTLQGTRQFFEQDNEVKKQYYTRDTAKKVVYTSNLDLYKSSVPAASWRDTIFCYMAPNPPSLQEFPTPCGESLIDFSKDVKKLGFTLLELLSEGLGLDRSYLKDYMDCFHLFCSCNYYPPCPQPELTMGTIQHTDIGFVTILLQDDMGGLQVLHQNHWVDVPPTPGSLVVNIGDFLQLLSNDKYLSVEHRAISNNVGSRMSITCFFGESPYQSSKLYGPITELLSEDNPPKYRATTVKDHTSYLHNRGLDGTSALSRYKI.

In terms of domain architecture, Fe2OG dioxygenase spans 212–312 (FHLFCSCNYY…MSITCFFGES (101 aa)). Fe cation-binding residues include His236, Asp238, and His292.

Belongs to the iron/ascorbate-dependent oxidoreductase family.

This chain is 1-aminocyclopropane-1-carboxylate oxidase homolog (ACO3), found in Solanum lycopersicum (Tomato).